We begin with the raw amino-acid sequence, 545 residues long: Chaperonin GroEL (545 aa).

ATP is bound by residues 29 to 32 (TLGP), 86 to 90 (DGTTT), Gly413, 476 to 478 (NAA), and Asp492.

Belongs to the chaperonin (HSP60) family. Forms a cylinder of 14 subunits composed of two heptameric rings stacked back-to-back. Interacts with the co-chaperonin GroES.

The protein localises to the cytoplasm. It catalyses the reaction ATP + H2O + a folded polypeptide = ADP + phosphate + an unfolded polypeptide.. Its function is as follows. Together with its co-chaperonin GroES, plays an essential role in assisting protein folding. The GroEL-GroES system forms a nano-cage that allows encapsulation of the non-native substrate proteins and provides a physical environment optimized to promote and accelerate protein folding. The polypeptide is Chaperonin GroEL (Oceanobacillus iheyensis (strain DSM 14371 / CIP 107618 / JCM 11309 / KCTC 3954 / HTE831)).